The chain runs to 201 residues: Small ribosomal subunit protein uS4c (201 aa).

In terms of domain architecture, S4 RNA-binding spans 89–157 (MRLDNILFRL…VQNYIASSDP (69 aa)).

Belongs to the universal ribosomal protein uS4 family. Part of the 30S ribosomal subunit. Contacts protein S5. The interaction surface between S4 and S5 is involved in control of translational fidelity.

It is found in the plastid. Its subcellular location is the chloroplast. Functionally, one of the primary rRNA binding proteins, it binds directly to 16S rRNA where it nucleates assembly of the body of the 30S subunit. In terms of biological role, with S5 and S12 plays an important role in translational accuracy. This is Small ribosomal subunit protein uS4c (rps4) from Hordeum vulgare (Barley).